The chain runs to 562 residues: NAD-dependent malic enzyme (562 aa).

Tyr101 (proton donor) is an active-site residue. Arg154 contacts NAD(+). Lys172 functions as the Proton acceptor in the catalytic mechanism. Glu243, Asp244, and Asp267 together coordinate a divalent metal cation. NAD(+)-binding residues include Asp267 and Asn415.

The protein belongs to the malic enzymes family. In terms of assembly, homotetramer. Mg(2+) serves as cofactor. Mn(2+) is required as a cofactor.

The enzyme catalyses (S)-malate + NAD(+) = pyruvate + CO2 + NADH. It carries out the reaction oxaloacetate + H(+) = pyruvate + CO2. This chain is NAD-dependent malic enzyme, found in Shewanella oneidensis (strain ATCC 700550 / JCM 31522 / CIP 106686 / LMG 19005 / NCIMB 14063 / MR-1).